Reading from the N-terminus, the 239-residue chain is Ribosomal RNA small subunit methyltransferase G (239 aa).

Residues glycine 78, phenylalanine 83, alanine 129–glutamate 130, and arginine 148 each bind S-adenosyl-L-methionine.

Belongs to the methyltransferase superfamily. RNA methyltransferase RsmG family.

Its subcellular location is the cytoplasm. Its function is as follows. Specifically methylates the N7 position of a guanine in 16S rRNA. The chain is Ribosomal RNA small subunit methyltransferase G from Clostridium botulinum (strain Okra / Type B1).